The following is a 720-amino-acid chain: Phosphatase and actin regulator 4 (720 aa).

The disordered stretch occupies residues 1-48 (MGQPRFSRPVHPAAAAEEVDHPPSDAGMGVDVLESGDTTPPTKRKSKF). The RPEL 1 repeat unit spans residues 74–99 (EVLERKISMRKPREELVKRGVLLEDP). Disordered stretches follow at residues 294-417 (SGTG…GLPR), 454-568 (NDGF…DTLA), and 610-648 (RPTAEELEQRNILQPKNEADRQAEKREIKRRLTRKLSQR). Residues 346-368 (TYPPPSPSPPLPTHIPPEPPRMP) show a composition bias toward pro residues. Residues 393–405 (KDFRSLEVSKRTA) are compositionally biased toward basic and acidic residues. Acidic residues-rich tracts occupy residues 481 to 494 (DDEEEEEEDQEEEQ), 521 to 534 (EEQEGEEGMSDSDS), and 542 to 551 (DDEEDEEEDE). 2 RPEL repeats span residues 601-626 (TTLIRRLSQRPTAEELEQRNILQPKN) and 639-664 (RRLTRKLSQRPTVAELQARKILRFNE). Residues 626–636 (NEADRQAEKRE) are compositionally biased toward basic and acidic residues. A compositionally biased stretch (basic residues) spans 637–646 (IKRRLTRKLS).

It belongs to the phosphatase and actin regulator family. Binds PPP1CA and actin.

The protein resides in the cytoplasm. It is found in the cell projection. The protein localises to the lamellipodium. In terms of biological role, regulator of protein phosphatase 1 (PP1) required for neural tube and optic fissure closure, and enteric neural crest cell (ENCCs) migration during development. Acts as an activator of PP1. During neural tube closure, localizes to the ventral neural tube and activates PP1, leading to down-regulate cell proliferation within cranial neural tissue and the neural retina. Also acts as a regulator of migration of enteric neural crest cells (ENCCs) by activating PP1, leading to repression of the integrin signaling through the RHO/ROCK pathway. This chain is Phosphatase and actin regulator 4 (PHACTR4), found in Gallus gallus (Chicken).